The sequence spans 225 residues: 2-C-methyl-D-erythritol 4-phosphate cytidylyltransferase (225 aa).

Belongs to the IspD/TarI cytidylyltransferase family. IspD subfamily.

It catalyses the reaction 2-C-methyl-D-erythritol 4-phosphate + CTP + H(+) = 4-CDP-2-C-methyl-D-erythritol + diphosphate. Its pathway is isoprenoid biosynthesis; isopentenyl diphosphate biosynthesis via DXP pathway; isopentenyl diphosphate from 1-deoxy-D-xylulose 5-phosphate: step 2/6. Functionally, catalyzes the formation of 4-diphosphocytidyl-2-C-methyl-D-erythritol from CTP and 2-C-methyl-D-erythritol 4-phosphate (MEP). The chain is 2-C-methyl-D-erythritol 4-phosphate cytidylyltransferase from Clostridium perfringens (strain SM101 / Type A).